We begin with the raw amino-acid sequence, 309 residues long: Methionyl-tRNA formyltransferase (309 aa).

107 to 110 (SLLP) is a (6S)-5,6,7,8-tetrahydrofolate binding site.

Belongs to the Fmt family.

It catalyses the reaction L-methionyl-tRNA(fMet) + (6R)-10-formyltetrahydrofolate = N-formyl-L-methionyl-tRNA(fMet) + (6S)-5,6,7,8-tetrahydrofolate + H(+). Functionally, attaches a formyl group to the free amino group of methionyl-tRNA(fMet). The formyl group appears to play a dual role in the initiator identity of N-formylmethionyl-tRNA by promoting its recognition by IF2 and preventing the misappropriation of this tRNA by the elongation apparatus. The protein is Methionyl-tRNA formyltransferase of Borrelia hermsii (strain HS1 / DAH).